Reading from the N-terminus, the 316-residue chain is Peroxidase 67 (316 aa).

An N-terminal signal peptide occupies residues 1–19; that stretch reads MLKVVLLMMIMMLASQSEA. Position 20 is a pyrrolidone carboxylic acid (glutamine 20). 4 disulfides stabilise this stretch: cysteine 30–cysteine 110, cysteine 63–cysteine 68, cysteine 116–cysteine 312, and cysteine 196–cysteine 221. Residue histidine 61 is the Proton acceptor of the active site. Residues aspartate 62, valine 65, glycine 67, aspartate 69, and serine 71 each coordinate Ca(2+). Proline 159 contributes to the substrate binding site. A heme b-binding site is contributed by histidine 189. Threonine 190 is a binding site for Ca(2+). Residue asparagine 205 is glycosylated (N-linked (GlcNAc...) asparagine). The Ca(2+) site is built by aspartate 236, serine 239, and aspartate 244.

This sequence belongs to the peroxidase family. Classical plant (class III) peroxidase subfamily. Heme b is required as a cofactor. Ca(2+) serves as cofactor.

The protein resides in the secreted. It carries out the reaction 2 a phenolic donor + H2O2 = 2 a phenolic radical donor + 2 H2O. In terms of biological role, removal of H(2)O(2), oxidation of toxic reductants, biosynthesis and degradation of lignin, suberization, auxin catabolism, response to environmental stresses such as wounding, pathogen attack and oxidative stress. These functions might be dependent on each isozyme/isoform in each plant tissue. This chain is Peroxidase 67 (PER67), found in Arabidopsis thaliana (Mouse-ear cress).